We begin with the raw amino-acid sequence, 255 residues long: Postacrosomal sheath WW domain-binding protein (255 aa).

Positions 15–87 (LIPNGESLLK…DLITNLTVEQ (73 aa)) constitute a GRAM domain. Tandem repeats lie at residues 139 to 145 (YGAPPAG), 146 to 152 (YGAPPAG), 153 to 159 (YGAPPPG), 160 to 166 (YGAPPAG), 167 to 173 (YGAPPPG), 174 to 180 (YGAPPAG), and 202 to 208 (YGAPPLG). Positions 139–208 (YGAPPAGYGA…PAGYGAPPLG (70 aa)) are 6 X 7 AA tandem repeat of Y-G-X-P-P-X-G. The PPxY motif signature appears at 171–174 (PPGY). Disordered stretches follow at residues 180–199 (GYGA…RASP) and 204–255 (APPL…ASSS).

May play a role in meiotic resumption and pronuclear formation, mediated by a WW domain-signaling pathway during fertilization. The protein is Postacrosomal sheath WW domain-binding protein (WBP2NL) of Macaca fascicularis (Crab-eating macaque).